The chain runs to 312 residues: Pyridoxal kinase (312 aa).

The residue at position 1 (M1) is an N-acetylmethionine. Pyridoxal-binding residues include S12 and T47. T47 contributes to the pyridoxal 5'-phosphate binding site. S59 is subject to Phosphoserine. D113 serves as a coordination point for ATP. D113 contributes to the Na(+) binding site. A Mg(2+)-binding site is contributed by D118. Residue T148 coordinates Na(+). 150–153 (NQFE) contacts ATP. A Phosphoserine modification is found at S164. T186 is a Na(+) binding site. 186–187 (TS) contributes to the ATP binding site. The residue at position 213 (S213) is a Phosphoserine. ATP contacts are provided by residues 226–228 (VDP) and T233. 234–235 (GD) lines the pyridoxal 5'-phosphate pocket. Catalysis depends on D235, which acts as the Proton acceptor. Residue S285 is modified to Phosphoserine.

It belongs to the pyridoxine kinase family. Homodimer. It depends on Zn(2+) as a cofactor. The cofactor is Mg(2+).

It is found in the cytoplasm. The protein localises to the cytosol. The enzyme catalyses pyridoxal + ATP = pyridoxal 5'-phosphate + ADP + H(+). It catalyses the reaction pyridoxamine + ATP = pyridoxamine 5'-phosphate + ADP + H(+). It carries out the reaction pyridoxine + ATP = pyridoxine 5'-phosphate + ADP + H(+). Its pathway is cofactor metabolism; pyridoxal 5'-phosphate salvage; pyridoxal 5'-phosphate from pyridoxal: step 1/1. It functions in the pathway cofactor metabolism; pyridoxal 5'-phosphate salvage; pyridoxine 5'-phosphate from pyridoxine: step 1/1. The protein operates within cofactor metabolism; pyridoxal 5'-phosphate salvage; pyridoxamine 5'-phosphate from pyridoxamine: step 1/1. With respect to regulation, activity is increased in the presence of K(+)or Na(+). Functionally, catalyzes the phosphorylation of the dietary vitamin B6 vitamers pyridoxal (PL), pyridoxine (PN) and pyridoxamine (PM) to form pyridoxal 5'-phosphate (PLP), pyridoxine 5'-phosphate (PNP) and pyridoxamine 5'-phosphate (PMP), respectively. PLP is the active form of vitamin B6, and acts as a cofactor for over 140 different enzymatic reactions. This is Pyridoxal kinase (Pdxk) from Rattus norvegicus (Rat).